Consider the following 301-residue polypeptide: UDP-N-acetylenolpyruvoylglucosamine reductase (301 aa).

The FAD-binding PCMH-type domain maps to 30–194; the sequence is VGGEADYLVF…LSVKFALAPG (165 aa). Residue Arg-173 is part of the active site. Ser-223 acts as the Proton donor in catalysis. Residue Glu-293 is part of the active site.

This sequence belongs to the MurB family. FAD is required as a cofactor.

It localises to the cytoplasm. It catalyses the reaction UDP-N-acetyl-alpha-D-muramate + NADP(+) = UDP-N-acetyl-3-O-(1-carboxyvinyl)-alpha-D-glucosamine + NADPH + H(+). Its pathway is cell wall biogenesis; peptidoglycan biosynthesis. Its function is as follows. Cell wall formation. This is UDP-N-acetylenolpyruvoylglucosamine reductase from Streptococcus pneumoniae (strain 70585).